Consider the following 393-residue polypeptide: Interferon regulatory factor 9 (393 aa).

A DNA-binding region (IRF tryptophan pentad repeat) is located at residues 9–116 (TRKLRNWVVE…EPYKVYQLLP (108 aa)). Disordered regions lie at residues 120–151 (VSGQ…AMQN) and 163–202 (LNNE…APFQ). Phosphoserine is present on serine 139.

This sequence belongs to the IRF family. As to quaternary structure, interacts with STAT2 in the cytoplasm. Forms the interferon-stimulated gene factor 3 complex (ISGF3) with the heterodimer STAT1:STAT2; upon stimulation. In terms of assembly, (Microbial infection) Interacts with measles virus V protein; this interaction prevents the binding of IRF9 to STAT2 and thereby the type I interferon signaling pathway. In terms of processing, (Microbial infection) Ubiquitinated by Herpes simplex virus 2 E3 ubiquitin ligase ICP22.

It localises to the cytoplasm. Its subcellular location is the nucleus. In terms of biological role, transcription factor that plays an essential role in anti-viral immunity. It mediates signaling by type I IFNs (IFN-alpha and IFN-beta). Following type I IFN binding to cell surface receptors, Jak kinases (TYK2 and JAK1) are activated, leading to tyrosine phosphorylation of STAT1 and STAT2. IRF9/ISGF3G associates with the phosphorylated STAT1:STAT2 dimer to form a complex termed ISGF3 transcription factor, that enters the nucleus. ISGF3 binds to the IFN stimulated response element (ISRE) to activate the transcription of interferon stimulated genes, which drive the cell in an antiviral state. The sequence is that of Interferon regulatory factor 9 (IRF9) from Homo sapiens (Human).